A 694-amino-acid chain; its full sequence is Frizzled-8 (694 aa).

The first 27 residues, 1–27, serve as a signal peptide directing secretion; it reads MEWGYLLEVTSLLAALALLQRSSGAAA. The Extracellular portion of the chain corresponds to 28–275; that stretch reads ASAKELACQE…NPFFSQDERA (248 aa). The 122-residue stretch at 30 to 151 folds into the FZ domain; the sequence is AKELACQEIT…GNPDTLCMDY (122 aa). Disulfide bonds link cysteine 35–cysteine 96, cysteine 43–cysteine 89, cysteine 80–cysteine 118, cysteine 107–cysteine 148, and cysteine 111–cysteine 135. Asparagine 49 carries N-linked (GlcNAc...) asparagine glycosylation. 71–78 contributes to the hexadecanoate binding site; that stretch reads QFWPLVEI. The interval 95–100 is wnt-binding; the sequence is ICLEDY. The segment at 147–152 is wnt-binding; it reads LCMDYN. N-linked (GlcNAc...) asparagine glycosylation is present at asparagine 152. The disordered stretch occupies residues 155-226; sequence DLTTAAPSPP…KARPPGGGAA (72 aa). Over residues 161 to 175 the composition is skewed to pro residues; it reads PSPPRRLPPPPPGEQ. The span at 176-186 shows a compositional bias: low complexity; it reads PPSGSGHGRPP. The span at 210–225 shows a compositional bias: gly residues; that stretch reads RGGGGGGKARPPGGGA. The chain crosses the membrane as a helical span at residues 276-296; sequence FTVFWIGLWSVLCFVSTFATV. Residues 297–312 lie on the Cytoplasmic side of the membrane; that stretch reads STFLIDMERFKYPERP. The chain crosses the membrane as a helical span at residues 313–333; sequence IIFLSACYLFVSVGYLVRLVA. Topologically, residues 334-396 are extracellular; that stretch reads GHEKVACSGG…RYETTGPALC (63 aa). A helical membrane pass occupies residues 397–417; that stretch reads TVVFLLVYFFGMASSIWWVIL. Topologically, residues 418–439 are cytoplasmic; it reads SLTWFLAAGMKWGNEAIAGYSQ. The chain crosses the membrane as a helical span at residues 440-460; sequence YFHLAAWLVPSVKSIAVLALS. Topologically, residues 461–483 are extracellular; sequence SVDGDPVAGICYVGNQSLDNLRG. The N-linked (GlcNAc...) asparagine glycan is linked to asparagine 475. Residues 484-504 form a helical membrane-spanning segment; sequence FVLAPLVIYLFIGTMFLLAGF. At 505 to 532 the chain is on the cytoplasmic side; sequence VSLFRIRSVIKQQDGPTKTHKLEKLMIR. The chain crosses the membrane as a helical span at residues 533-553; the sequence is LGLFTVLYTVPAAVVVACLFY. Over 554-584 the chain is Extracellular; that stretch reads EQHNRPRWEATHNCPCLRDLQPDQARRPDYA. The chain crosses the membrane as a helical span at residues 585 to 605; sequence VFMLKYFMCLVVGITSGVWVW. Residues 606-694 lie on the Cytoplasmic side of the membrane; sequence SGKTLESWRS…YPKQMPLSQV (89 aa). Residues 608 to 613 carry the Lys-Thr-X-X-X-Trp motif, mediates interaction with the PDZ domain of Dvl family members motif; it reads KTLESW. Positions 648–664 are enriched in gly residues; that stretch reads GGGGPGGGGGPGGGGGS. Residues 648-668 form a disordered region; it reads GGGGPGGGGGPGGGGGSLYSD. The short motif at 692–694 is the PDZ-binding element; sequence SQV.

Belongs to the G-protein coupled receptor Fz/Smo family. As to quaternary structure, component of a Wnt-signaling complex that contains a WNT protein, a FZD protein and LRP5 or LRP6. Interacts directly with LRP5 or LRP6; the interaction is promoted by Wnt-binding and signaling and inhibited by DKK1. Interacts with GPOC, RSPO1 and RSPO3. Interacts with glypican GPC3. Ubiquitinated by ZNRF3, leading to its degradation by the proteasome. Most abundant in fetal kidney, followed by brain and lung. In adult tissues, expressed in kidney, heart, pancreas and skeletal muscle.

It localises to the membrane. Its subcellular location is the golgi apparatus. The protein resides in the cell membrane. In terms of biological role, receptor for Wnt proteins. Component of the Wnt-Fzd-LRP5-LRP6 complex that triggers beta-catenin signaling through inducing aggregation of receptor-ligand complexes into ribosome-sized signalosomes. The beta-catenin canonical signaling pathway leads to the activation of disheveled proteins, inhibition of GSK-3 kinase, nuclear accumulation of beta-catenin and activation of Wnt target genes. A second signaling pathway involving PKC and calcium fluxes has been seen for some family members, but it is not yet clear if it represents a distinct pathway or if it can be integrated in the canonical pathway, as PKC seems to be required for Wnt-mediated inactivation of GSK-3 kinase. Both pathways seem to involve interactions with G-proteins. May be involved in transduction and intercellular transmission of polarity information during tissue morphogenesis and/or in differentiated tissues. Coreceptor along with RYK of Wnt proteins, such as WNT1. This chain is Frizzled-8 (FZD8), found in Homo sapiens (Human).